The chain runs to 469 residues: Septin homolog spn1 (469 aa).

A disordered region spans residues 1-58; that stretch reads MASMVLADGMPTVKDDSTRSRGSDVDSFTSTDNVTQINVEAAISENKNEEKPIQDNSE. Basic and acidic residues predominate over residues 13 to 24; the sequence is VKDDSTRSRGSD. The segment covering 26-38 has biased composition (polar residues); that stretch reads DSFTSTDNVTQIN. The 276-residue stretch at 92–367 folds into the Septin-type G domain; sequence QGFNFNVLVL…EAYRTERLLS (276 aa). The segment at 102–109 is G1 motif; it reads GESGSGKS. GTP is bound by residues 102–109, T139, G165, 244–252, and R317; these read GESGSGKS and KADTLTDDE. A G3 motif region spans residues 162–165; the sequence is DTPG. The G4 motif stretch occupies residues 243–246; sequence AKAD. A coiled-coil region spans residues 383-469; it reads SAKLEEERAL…NEKSKRKFFK (87 aa).

Belongs to the TRAFAC class TrmE-Era-EngA-EngB-Septin-like GTPase superfamily. Septin GTPase family. Component of the septin complex composed of two copies of each spn1, spn2, spn3 and spn4.

It localises to the cytoplasm. It is found in the cell cortex. Plays a role in the cell cycle. Involved in a late stage of septum formation leading to the separation of the daughter cells. This is Septin homolog spn1 (spn1) from Schizosaccharomyces pombe (strain 972 / ATCC 24843) (Fission yeast).